We begin with the raw amino-acid sequence, 177 residues long: Large ribosomal subunit protein uL6 (177 aa).

The protein belongs to the universal ribosomal protein uL6 family. In terms of assembly, part of the 50S ribosomal subunit.

Its function is as follows. This protein binds to the 23S rRNA, and is important in its secondary structure. It is located near the subunit interface in the base of the L7/L12 stalk, and near the tRNA binding site of the peptidyltransferase center. The polypeptide is Large ribosomal subunit protein uL6 (Micrococcus luteus (strain ATCC 4698 / DSM 20030 / JCM 1464 / CCM 169 / CCUG 5858 / IAM 1056 / NBRC 3333 / NCIMB 9278 / NCTC 2665 / VKM Ac-2230) (Micrococcus lysodeikticus)).